The sequence spans 138 residues: Transcription factor Atoh7-a (138 aa).

The region spanning 33-85 is the bHLH domain; that stretch reads KRRLAANARERRRMQGLNTAFDSLRKVVPQWGEDKQLSKYETLQMALSYIMAL.

The protein resides in the nucleus. It is found in the perikaryon. It localises to the cell projection. Its subcellular location is the axon. Functionally, transcription factor that binds to DNA at the consensus sequence 5'-CAG[GC]TG-3'. Positively regulates the determination of retinal ganglion cell fate and formation of the optic nerve and retino-hypothalamic tract. Required for retinal circadian rhythm photoentrainment. Plays a role in brainstem auditory signaling and binaural processing. Regulates the differentiation of olfactory receptor neurons. During retinal neurogenesis, activates the transcription of several genes such as brn3d, coe3, cbfa2t2, glis2, elrC and xgadd45-gamma. This Xenopus laevis (African clawed frog) protein is Transcription factor Atoh7-a.